The chain runs to 286 residues: Protein METABOLIC NETWORK MODULATOR 1 (286 aa).

Positions 1-10 (MEKESHEENN) are enriched in basic and acidic residues. Disordered stretches follow at residues 1-60 (MEKE…DDEA), 123-146 (VMHH…GSGV), and 181-204 (GGER…SGAS). Residues 20 to 29 (KRKRGRPRKQ) show a composition bias toward basic residues. Residues 30–39 (LKLESNEHSL) are compositionally biased toward basic and acidic residues. Basic residues predominate over residues 131–140 (KRGRKSRFRE). Over residues 191–204 (PMQTETGSQASGAS) the composition is skewed to polar residues.

As to expression, mailny observed in young seedlings and in emerging leaves.

In terms of biological role, lineage-specific modulator of primary metabolism. Influences flowering time. The sequence is that of Protein METABOLIC NETWORK MODULATOR 1 from Arabidopsis thaliana (Mouse-ear cress).